The primary structure comprises 77 residues: Large ribosomal subunit protein bL31 (77 aa).

Positions 16, 18, 37, and 40 each coordinate Zn(2+).

It belongs to the bacterial ribosomal protein bL31 family. Type A subfamily. In terms of assembly, part of the 50S ribosomal subunit. Requires Zn(2+) as cofactor.

Functionally, binds the 23S rRNA. This is Large ribosomal subunit protein bL31 from Pseudomonas fluorescens (strain SBW25).